A 334-amino-acid chain; its full sequence is Uroporphyrinogen decarboxylase (334 aa).

Residues 22–26, Asp-71, Tyr-140, Ser-195, and His-310 contribute to the substrate site; that span reads RQVGR.

The protein belongs to the uroporphyrinogen decarboxylase family. As to quaternary structure, homodimer.

The protein resides in the cytoplasm. It catalyses the reaction uroporphyrinogen III + 4 H(+) = coproporphyrinogen III + 4 CO2. Its pathway is porphyrin-containing compound metabolism; protoporphyrin-IX biosynthesis; coproporphyrinogen-III from 5-aminolevulinate: step 4/4. Functionally, catalyzes the decarboxylation of four acetate groups of uroporphyrinogen-III to yield coproporphyrinogen-III. This chain is Uroporphyrinogen decarboxylase, found in Chlamydia muridarum (strain MoPn / Nigg).